The following is a 629-amino-acid chain: Probable potassium transport system protein Kup 3 (629 aa).

12 helical membrane-spanning segments follow: residues 20-40, 54-74, 106-126, 143-163, 171-191, 212-232, 253-273, 291-311, 343-363, 372-392, 400-420, and 425-445; these read LSLSALGIVYGDIGTSPLYTF, VTTIMGSASLIIWTLIIIASV, PFIIAVGLMGAALIYGDGTIT, PSLKYYVLPIAITILITLFAI, IGKAFGPVMAFWFLTIGILGA, FLFSNGATGFFILCGVFLCVT, WFGLAFPSLIFNYLGQAALVL, FLLPLIILSTVATIIASQAII, IYIGVVNWLLMLATLGLIIGF, AYGIAVSATMLCTSVLLFIAL, IIKSGLVAGLFMIVDASFFAA, and FINGGYIPITLAIIIYSMMYI.

Belongs to the HAK/KUP transporter (TC 2.A.72) family.

The protein localises to the cell inner membrane. The catalysed reaction is K(+)(in) + H(+)(in) = K(+)(out) + H(+)(out). Transport of potassium into the cell. Likely operates as a K(+):H(+) symporter. In Legionella pneumophila (strain Corby), this protein is Probable potassium transport system protein Kup 3.